The sequence spans 395 residues: GPI-anchor transamidase (395 aa).

Positions 1–27 (MAVTDSLSRAASTLAAVLLLSFGSVAA) are cleaved as a signal peptide. Over 28–368 (SHIEDQAEQF…PKLKDWHPPG (341 aa)) the chain is Lumenal. Positions 79, 82, 118, and 120 each coordinate Ca(2+). Catalysis depends on H164, which acts as the Proton donor. C206 functions as the Nucleophile; acyl-thioester intermediate in the catalytic mechanism. Residues C206, S232, and S234 each contribute to the a protein site. Positions 231 to 236 (DSLSHQ) are autoinhibitory loop. C275 and C280 are disulfide-bonded. A helical membrane pass occupies residues 369 to 385 (GFILGLWALIIMVFFKT). Topologically, residues 386–395 (YGIKHMKFIF) are cytoplasmic.

It belongs to the peptidase C13 family. Heteropentamer. Part of the GPI-anchor transamidase complex, consisting of PIGK, PIGT, PIGS, PIGU and GAA1. Interacts with GPAA1. Interacts with PIGT; this interaction, via a disulfide link, stabilizes the expression of GAA1 and PIGK and links them to PIGS. In terms of processing, the disulfide bond between PIGK/GPI8 and PIGT is important for normal enzyme activity.

It is found in the endoplasmic reticulum membrane. The protein operates within glycolipid biosynthesis; glycosylphosphatidylinositol-anchor biosynthesis. Its activity is regulated as follows. In the absence of proproteins substrates, exists in an inactive state with a disrupted catalytic site by an autoinhibitory loop. The binding of proprotein substrates, particularly the CSP region, to GPI-T triggers concerted conformational changes that alleviate the inhibition by the autoinhibitory loop. Meanwhile, proprotein residues near the omega- site induce the formation of a catalytic cleft for catalysis, following which the products are released and GPI-T reverts to the inactive state. Functionally, catalytic subunit of the glycosylphosphatidylinositol-anchor (GPI-anchor) transamidase (GPI-T) complex that catalyzes the formation of the linkage between a proprotein and a GPI-anchor and participates in GPI anchored protein biosynthesis. Recognizes diverse proproteins at a C-terminal signal peptide (CSP) region that lacks consensus sequence and replaces it with a GPI-anchor via a transamidation reaction. Transamidation catalysis reaction follows a two-phase mechanism. In the acyl-enzyme phase, the carbonyl group of the proproteins's omega-site undergoes a nucleophilic attack forming an enzyme-substrate thioester bond. Followed by a general acid catalysis that allows CSP releasing, regenerating the carbonyl, and forming the acyl-enzyme intermediate. In the GPI-anchor attachment phase, the amino group of the GPI-anchor's ethanolamine phosphate, the one on third mannose (EtNP3), mediates a nucleophilic attack on the carbonyl of the acyl-enzyme intermediate, replacing the CSP, allowing GPI-anchor attachment to the omega-residue, therefore forming the product and freeing the enzyme. This is GPI-anchor transamidase from Pongo abelii (Sumatran orangutan).